Consider the following 144-residue polypeptide: Bacilliredoxin BCE_4227 (144 aa).

This sequence belongs to the bacilliredoxin family.

The sequence is that of Bacilliredoxin BCE_4227 from Bacillus cereus (strain ATCC 10987 / NRS 248).